The following is a 1050-amino-acid chain: Atrial natriuretic peptide receptor 2 (1050 aa).

An N-terminal signal peptide occupies residues methionine 1–cysteine 19. Residues arginine 20–leucine 460 lie on the Extracellular side of the membrane. Residues asparagine 26 and asparagine 74 are each glycosylated (N-linked (GlcNAc...) asparagine). Cysteine 84 and cysteine 110 are oxidised to a cystine. Residues asparagine 169, asparagine 203, asparagine 285, asparagine 352, asparagine 366, and asparagine 415 are each glycosylated (N-linked (GlcNAc...) asparagine). Cysteines 236 and 339 form a disulfide. The helical transmembrane segment at glycine 461–isoleucine 481 threads the bilayer. Over tyrosine 482–isoleucine 1050 the chain is Cytoplasmic. One can recognise a Protein kinase domain in the interval serine 517–valine 790. The Guanylate cyclase domain maps to threonine 865–glutamate 995.

Belongs to the adenylyl cyclase class-4/guanylyl cyclase family. Post-translationally, phosphorylated. Phosphorylation of the protein kinase-like domain is required for full activation by CNP. Glycosylated. As to expression, high levels found in liver, atrium and gill. Moderate levels found in brain and ventricle, and low levels in esophageal sphincter, stomach, posterior intestine and kidney.

It is found in the cell membrane. The catalysed reaction is GTP = 3',5'-cyclic GMP + diphosphate. Functionally, receptor for the C-type natriuretic peptide NPPC/CNP hormone. Has guanylate cyclase activity upon binding of its ligand. May play a role in the regulation of skeletal growth. In Anguilla japonica (Japanese eel), this protein is Atrial natriuretic peptide receptor 2 (npr2).